The chain runs to 343 residues: Anthranilate phosphoribosyltransferase (343 aa).

Residues Gly84, 87–88 (GD), Thr92, 94–97 (NIST), 112–120 (KHGNRGVSS), and Ser124 each bind 5-phospho-alpha-D-ribose 1-diphosphate. Gly84 serves as a coordination point for anthranilate. Ser96 contributes to the Mg(2+) binding site. An anthranilate-binding site is contributed by Asn115. Arg170 lines the anthranilate pocket. Mg(2+)-binding residues include Asp229 and Glu230.

Belongs to the anthranilate phosphoribosyltransferase family. Homodimer. Mg(2+) serves as cofactor.

The catalysed reaction is N-(5-phospho-beta-D-ribosyl)anthranilate + diphosphate = 5-phospho-alpha-D-ribose 1-diphosphate + anthranilate. The protein operates within amino-acid biosynthesis; L-tryptophan biosynthesis; L-tryptophan from chorismate: step 2/5. Its function is as follows. Catalyzes the transfer of the phosphoribosyl group of 5-phosphorylribose-1-pyrophosphate (PRPP) to anthranilate to yield N-(5'-phosphoribosyl)-anthranilate (PRA). The protein is Anthranilate phosphoribosyltransferase of Burkholderia pseudomallei (strain 1106a).